The chain runs to 20 residues: Toxin TpF21-Cocle (20 aa).

The region spanning 1 to 20 (KDGYLVGNDGCKYSCNTYPK) is the LCN-type CS-alpha/beta domain.

This sequence belongs to the long (4 C-C) scorpion toxin superfamily. Sodium channel inhibitor family. Beta subfamily. As to expression, expressed by the venom gland.

The protein localises to the secreted. Its function is as follows. Beta toxins bind voltage-independently at site-4 of sodium channels (Nav) and shift the voltage of activation toward more negative potentials thereby affecting sodium channel activation and promoting spontaneous and repetitive firing. This chain is Toxin TpF21-Cocle, found in Tityus pachyurus (Colombian scorpion).